A 129-amino-acid chain; its full sequence is Large ribosomal subunit protein bL17 (129 aa).

Belongs to the bacterial ribosomal protein bL17 family. As to quaternary structure, part of the 50S ribosomal subunit. Contacts protein L32.

The chain is Large ribosomal subunit protein bL17 from Polynucleobacter asymbioticus (strain DSM 18221 / CIP 109841 / QLW-P1DMWA-1) (Polynucleobacter necessarius subsp. asymbioticus).